The following is a 396-amino-acid chain: Cell adhesion molecule 3 (396 aa).

An N-terminal signal peptide occupies residues 1–22 (MGAPSALPLLLLLACSWAPGGA). The Ig-like V-type domain maps to 23–124 (NLSQDDSQPW…VRTAKSLVTV (102 aa)). The Extracellular portion of the chain corresponds to 23–328 (NLSQDDSQPW…PVPSSSSTYH (306 aa)). 3 disulfides stabilise this stretch: cysteine 48/cysteine 108, cysteine 150/cysteine 207, and cysteine 252/cysteine 297. Ig-like C2-type domains lie at 128 to 226 (PQKP…QRIE) and 231 to 313 (PTAM…FTLN). N-linked (GlcNAc...) asparagine glycosylation occurs at asparagine 288. The helical transmembrane segment at 329-349 (AIIGGIVAFIVFLLLILLIFL) threads the bilayer. The Cytoplasmic segment spans residues 350-396 (GHYLIRHKGTYLTHEAKGSDDAPDADTAIINAEGGQSGGDDKKEYFI). Residues 365–396 (AKGSDDAPDADTAIINAEGGQSGGDDKKEYFI) are disordered. Serine 386 carries the post-translational modification Phosphoserine.

This sequence belongs to the nectin family. As to quaternary structure, homodimer. Can form trans-heterodimers with NECTIN3. Interacts with EPB41L1, DLG3, PALS2 and CASK.

Its subcellular location is the cell membrane. It is found in the cell junction. Functionally, involved in cell-cell adhesion. Has both calcium-independent homophilic cell-cell adhesion activity and calcium-independent heterophilic cell-cell adhesion activity with IGSF4, NECTIN1 and NECTIN3. Interaction with EPB41L1 may regulate structure or function of cell-cell junctions. The chain is Cell adhesion molecule 3 (Cadm3) from Rattus norvegicus (Rat).